The chain runs to 179 residues: Segregation and condensation protein B (179 aa).

This sequence belongs to the ScpB family. Homodimer. Homodimerization may be required to stabilize the binding of ScpA to the Smc head domains. Component of a cohesin-like complex composed of ScpA, ScpB and the Smc homodimer, in which ScpA and ScpB bind to the head domain of Smc. The presence of the three proteins is required for the association of the complex with DNA.

The protein resides in the cytoplasm. Participates in chromosomal partition during cell division. May act via the formation of a condensin-like complex containing Smc and ScpA that pull DNA away from mid-cell into both cell halves. This is Segregation and condensation protein B from Streptococcus equi subsp. equi (strain 4047).